We begin with the raw amino-acid sequence, 282 residues long: Methyltransferase tpcH (282 aa).

The protein belongs to the class I-like SAM-binding methyltransferase superfamily. As to expression, specifically expressed in conidia.

Its pathway is secondary metabolite biosynthesis. Its function is as follows. Methyltransferase; part of the gene cluster that mediates the biosynthesis of trypacidin, a mycotoxin with antiprotozoal activity and that plays a role in the infection process. The pathway begins with the synthesis of atrochrysone thioester by the polyketide synthase (PKS) tpcC. The atrochrysone carboxyl ACP thioesterase tpcB then breaks the thioester bond and releases the atrochrysone carboxylic acid from tpcC. The decarboxylase tpcK converts atrochrysone carboxylic acid to atrochrysone which is further reduced into emodin anthrone. The next step is performed by the emodin anthrone oxygenase tpcL that catalyzes the oxidation of emodinanthrone to emodin. Emodin O-methyltransferase encoded by tpcA catalyzes methylation of the 8-hydroxy group of emodin to form questin. Ring cleavage of questin by questin oxidase tpcI leads to desmethylsulochrin via several intermediates including questin epoxide. Another methylation step catalyzed by tpcM leads to the formation of sulochrin which is further converted to monomethylsulfochrin by tpcH. Finally, the tpcJ catalyzes the conversion of monomethylsulfochrin to trypacidin. Trypacidin is toxic for human pulmonary and bronchial epithelial cells by initiating the intracellular formation of nitric oxide (NO) and hydrogen peroxide (H(2)O(2)), thus triggering host necrotic cell death. The trypacidin pathway is also able to produce endocrocin via a distinct route from the endocrocin Enc pathway. The chain is Methyltransferase tpcH from Aspergillus fumigatus (strain ATCC MYA-4609 / CBS 101355 / FGSC A1100 / Af293) (Neosartorya fumigata).